A 264-amino-acid polypeptide reads, in one-letter code: 3-dehydroquinate dehydratase (264 aa).

Residues 50–52 (EWR) and Arg-86 contribute to the 3-dehydroquinate site. His-148 acts as the Proton donor/acceptor in catalysis. Catalysis depends on Lys-175, which acts as the Schiff-base intermediate with substrate. Arg-217, Ser-236, and Gln-240 together coordinate 3-dehydroquinate.

Belongs to the type-I 3-dehydroquinase family. Homodimer.

It carries out the reaction 3-dehydroquinate = 3-dehydroshikimate + H2O. It participates in metabolic intermediate biosynthesis; chorismate biosynthesis; chorismate from D-erythrose 4-phosphate and phosphoenolpyruvate: step 3/7. In terms of biological role, involved in the third step of the chorismate pathway, which leads to the biosynthesis of aromatic amino acids. Catalyzes the cis-dehydration of 3-dehydroquinate (DHQ) and introduces the first double bond of the aromatic ring to yield 3-dehydroshikimate. This chain is 3-dehydroquinate dehydratase, found in Albidiferax ferrireducens (strain ATCC BAA-621 / DSM 15236 / T118) (Rhodoferax ferrireducens).